Consider the following 215-residue polypeptide: Pyrrolidone-carboxylate peptidase 1 (215 aa).

Catalysis depends on residues Glu80, Cys143, and His167.

This sequence belongs to the peptidase C15 family. Homotetramer.

It is found in the cytoplasm. The enzyme catalyses Release of an N-terminal pyroglutamyl group from a polypeptide, the second amino acid generally not being Pro.. Removes 5-oxoproline from various penultimate amino acid residues except L-proline. This is Pyrrolidone-carboxylate peptidase 1 from Ralstonia nicotianae (strain ATCC BAA-1114 / GMI1000) (Ralstonia solanacearum).